Here is a 411-residue protein sequence, read N- to C-terminus: Eukaryotic initiation factor 4A-III (411 aa).

An N-acetylmethionine modification is found at Met1. Ala2 is modified (N-acetylalanine; in Eukaryotic initiation factor 4A-III, N-terminally processed). Residues Ser10 and Ser12 each carry the phosphoserine modification. Residue Lys19 forms a Glycyl lysine isopeptide (Lys-Gly) (interchain with G-Cter in SUMO2) linkage. The short motif at 38–66 is the Q motif element; that stretch reads PTFDTMGLREDLLRGIYAYGFEKPSAIQQ. ATP is bound by residues Lys60, Gln65, and 85–90; that span reads GTGKTA. In terms of domain architecture, Helicase ATP-binding spans 69–239; the sequence is IKQIIKGRDV…NKFMTDPIRI (171 aa). Lys124 carries the N6-acetyllysine modification. A Glycyl lysine isopeptide (Lys-Gly) (interchain with G-Cter in SUMO2) cross-link involves residue Lys152. Thr163 is subject to Phosphothreonine. The DEAD box signature appears at 187–190; that stretch reads DEAD. Residues Lys198 and Lys296 each carry the N6-acetyllysine modification. One can recognise a Helicase C-terminal domain in the interval 250 to 411; sequence GIKQFFVAVE…EMPMNVADLI (162 aa). A Glycyl lysine isopeptide (Lys-Gly) (interchain with G-Cter in SUMO2) cross-link involves residue Lys314. Lys321 carries the post-translational modification N6-acetyllysine. ATP contacts are provided by residues Asp342 and 367–371; that span reads RSGRY. Residues Lys374 and Lys382 each participate in a glycyl lysine isopeptide (Lys-Gly) (interchain with G-Cter in SUMO2) cross-link.

The protein belongs to the DEAD box helicase family. eIF4A subfamily. Identified in the spliceosome C complex. Core component of the mRNA splicing-dependent exon junction complex (EJC); the core complex contains CASC3, EIF4A3, MAGOH or MAGOHB, and RBM8A. Interacts with CASC3, MAGOH, NXF1, RBM8A and ALYREF/THOC4. Component of the ALYREF/THOC4-EJC-RNA complex; in the complex interacts with MAGOH, RBM8A and THOC4 (via the WXHD motif); these interactions are likely specific to RNA-bound EJC. May interact with NOM1. Interacts with POLDIP3. Interacts with CWC22 and PRPF19 in an RNA-independent manner. Direct interaction with CWC22 is mediated by the helicase C-terminal domain. Full interaction with CWC22 occurs only when EIF4A3 is not part of the EJC and prevents EIF4A3 binding to RNA. Identified in a complex composed of the EJC core, UPF3B and UPF2. The EJC core can also interact with UPF3A (in vitro). Interacts with NCBP3. Interacts with NRDE2. Interacts with DHX34; the interaction is RNA-independent. As to expression, ubiquitously expressed.

The protein resides in the nucleus. It localises to the nucleus speckle. The protein localises to the cytoplasm. The enzyme catalyses ATP + H2O = ADP + phosphate + H(+). Its activity is regulated as follows. The ATPase activity is increased some 4-fold in the presence of RNA. Functionally, ATP-dependent RNA helicase. Involved in pre-mRNA splicing as component of the spliceosome. Core component of the splicing-dependent multiprotein exon junction complex (EJC) deposited at splice junctions on mRNAs. The EJC is a dynamic structure consisting of core proteins and several peripheral nuclear and cytoplasmic associated factors that join the complex only transiently either during EJC assembly or during subsequent mRNA metabolism. The EJC marks the position of the exon-exon junction in the mature mRNA for the gene expression machinery and the core components remain bound to spliced mRNAs throughout all stages of mRNA metabolism thereby influencing downstream processes including nuclear mRNA export, subcellular mRNA localization, translation efficiency and nonsense-mediated mRNA decay (NMD). Its RNA-dependent ATPase and RNA-helicase activities are induced by CASC3, but abolished in presence of the MAGOH-RBM8A heterodimer, thereby trapping the ATP-bound EJC core onto spliced mRNA in a stable conformation. The inhibition of ATPase activity by the MAGOH-RBM8A heterodimer increases the RNA-binding affinity of the EJC. Involved in translational enhancement of spliced mRNAs after formation of the 80S ribosome complex. Binds spliced mRNA in sequence-independent manner, 20-24 nucleotides upstream of mRNA exon-exon junctions. Shows higher affinity for single-stranded RNA in an ATP-bound core EJC complex than after the ATP is hydrolyzed. Involved in the splicing modulation of BCL2L1/Bcl-X (and probably other apoptotic genes); specifically inhibits formation of proapoptotic isoforms such as Bcl-X(S); the function is different from the established EJC assembly. Involved in craniofacial development. The protein is Eukaryotic initiation factor 4A-III (EIF4A3) of Homo sapiens (Human).